A 365-amino-acid polypeptide reads, in one-letter code: tRNA 2-selenouridine synthase (365 aa).

Residues 15–138 enclose the Rhodanese domain; it reads FIAGQPLIDL…MRQYLIGVIE (124 aa). Cysteine 98 serves as the catalytic S-selanylcysteine intermediate.

It belongs to the SelU family. Monomer.

The enzyme catalyses 5-methylaminomethyl-2-thiouridine(34) in tRNA + selenophosphate + (2E)-geranyl diphosphate + H2O + H(+) = 5-methylaminomethyl-2-selenouridine(34) in tRNA + (2E)-thiogeraniol + phosphate + diphosphate. The catalysed reaction is 5-methylaminomethyl-2-thiouridine(34) in tRNA + (2E)-geranyl diphosphate = 5-methylaminomethyl-S-(2E)-geranyl-thiouridine(34) in tRNA + diphosphate. It carries out the reaction 5-methylaminomethyl-S-(2E)-geranyl-thiouridine(34) in tRNA + selenophosphate + H(+) = 5-methylaminomethyl-2-(Se-phospho)selenouridine(34) in tRNA + (2E)-thiogeraniol. It catalyses the reaction 5-methylaminomethyl-2-(Se-phospho)selenouridine(34) in tRNA + H2O = 5-methylaminomethyl-2-selenouridine(34) in tRNA + phosphate. Functionally, involved in the post-transcriptional modification of the uridine at the wobble position (U34) of tRNA(Lys), tRNA(Glu) and tRNA(Gln). Catalyzes the conversion of 2-thiouridine (S2U-RNA) to 2-selenouridine (Se2U-RNA). Acts in a two-step process involving geranylation of 2-thiouridine (S2U) to S-geranyl-2-thiouridine (geS2U) and subsequent selenation of the latter derivative to 2-selenouridine (Se2U) in the tRNA chain. The protein is tRNA 2-selenouridine synthase of Shewanella sp. (strain ANA-3).